The chain runs to 243 residues: Venom protease (243 aa).

One can recognise a Peptidase S1 domain in the interval valine 1–lysine 243. Cysteine 34 and cysteine 50 are joined by a disulfide. Catalysis depends on charge relay system residues histidine 49 and aspartate 97. 2 cysteine pairs are disulfide-bonded: cysteine 165–cysteine 178 and cysteine 189–cysteine 217. The active-site Charge relay system is serine 193.

The protein belongs to the peptidase S1 family. As to expression, expressed by the venom duct.

The protein resides in the secreted. The polypeptide is Venom protease (Bombus pensylvanicus (American bumblebee)).